The primary structure comprises 295 residues: Ribosomal RNA small subunit methyltransferase A (295 aa).

S-adenosyl-L-methionine contacts are provided by asparagine 31, leucine 33, glycine 58, glutamate 79, aspartate 104, and asparagine 129.

It belongs to the class I-like SAM-binding methyltransferase superfamily. rRNA adenine N(6)-methyltransferase family. RsmA subfamily.

Its subcellular location is the cytoplasm. It carries out the reaction adenosine(1518)/adenosine(1519) in 16S rRNA + 4 S-adenosyl-L-methionine = N(6)-dimethyladenosine(1518)/N(6)-dimethyladenosine(1519) in 16S rRNA + 4 S-adenosyl-L-homocysteine + 4 H(+). Specifically dimethylates two adjacent adenosines (A1518 and A1519) in the loop of a conserved hairpin near the 3'-end of 16S rRNA in the 30S particle. May play a critical role in biogenesis of 30S subunits. The polypeptide is Ribosomal RNA small subunit methyltransferase A (Enterococcus faecalis (strain ATCC 700802 / V583)).